Consider the following 242-residue polypeptide: Universal stress protein PHOS32 (242 aa).

The transit peptide at 1 to 43 (MNPADSDHPQLPNIKIHHPPSPRHSHHHHSSSTPSSAATPTPT) directs the protein to the chloroplast. A disordered region spans residues 1 to 45 (MNPADSDHPQLPNIKIHHPPSPRHSHHHHSSSTPSSAATPTPTAG). Residues 15–30 (KIHHPPSPRHSHHHHS) are compositionally biased toward basic residues. Pro-19 lines the ATP pocket. The residue at position 21 (Ser-21) is a Phosphoserine; by MAPK3 and MAPK6. Positions 31-44 (SSTPSSAATPTPTA) are enriched in low complexity. ATP is bound by residues Val-83, 168–178 (GSRGFGAEKKR), and 186–188 (SVS). The residue at position 219 (Ser-219) is a Phosphoserine.

This sequence belongs to the universal stress protein A family. Post-translationally, phosphorylated by MAPK3 and MAPK6 after pathogenic elicitation (e.g. bacterial flg22, Phytophthora infestans zoospores and xylanase).

The protein resides in the plastid. It localises to the chloroplast. The sequence is that of Universal stress protein PHOS32 from Arabidopsis thaliana (Mouse-ear cress).